The sequence spans 112 residues: uncharacterized protein (112 aa).

This is an uncharacterized protein from Archaeoglobus fulgidus (strain ATCC 49558 / DSM 4304 / JCM 9628 / NBRC 100126 / VC-16).